The chain runs to 224 residues: Cytidylate kinase (224 aa).

13–21 (GPSASGKGT) lines the ATP pocket.

This sequence belongs to the cytidylate kinase family. Type 1 subfamily.

Its subcellular location is the cytoplasm. The enzyme catalyses CMP + ATP = CDP + ADP. It carries out the reaction dCMP + ATP = dCDP + ADP. The polypeptide is Cytidylate kinase (Nitrosomonas eutropha (strain DSM 101675 / C91 / Nm57)).